The sequence spans 95 residues: NADH-quinone oxidoreductase subunit 11 (95 aa).

Helical transmembrane passes span 1 to 21, 25 to 45, and 59 to 79; these read MSYLLTSALLFALGVYGVLTR, ILVFLSIELMLNAANLSLVGF, and MVIAVAAAEVAVGLGLIVAIF.

This sequence belongs to the complex I subunit 4L family. As to quaternary structure, NDH-1 is composed of 15 different subunits, Nqo1 to Nqo15. The complex has a L-shaped structure, with the hydrophobic arm (subunits Nqo7, Nqo8 and Nqo10 to Nqo14) embedded in the membrane and the hydrophilic peripheral arm (subunits Nqo1 to Nqo6, Nqo9 and Nqo15) protruding into the bacterial cytoplasm. The hydrophilic domain contains all the redox centers.

The protein localises to the cell inner membrane. The catalysed reaction is a quinone + NADH + 5 H(+)(in) = a quinol + NAD(+) + 4 H(+)(out). Its function is as follows. NDH-1 shuttles electrons from NADH, via FMN and iron-sulfur (Fe-S) centers, to quinones in the respiratory chain. The immediate electron acceptor for the enzyme in this species is menaquinone. Couples the redox reaction to proton translocation (for every two electrons transferred, four hydrogen ions are translocated across the cytoplasmic membrane), and thus conserves the redox energy in a proton gradient required for the synthesis of ATP. The protein is NADH-quinone oxidoreductase subunit 11 (nqo11) of Thermus thermophilus (strain ATCC 27634 / DSM 579 / HB8).